A 68-amino-acid polypeptide reads, in one-letter code: Large ribosomal subunit protein bL32 (68 aa).

Positions 1–20 (MAVQQNKVSKSRRNNRRAHD) are disordered.

Belongs to the bacterial ribosomal protein bL32 family.

The polypeptide is Large ribosomal subunit protein bL32 (Ruegeria sp. (strain TM1040) (Silicibacter sp.)).